Consider the following 477-residue polypeptide: Cysteine--tRNA ligase (477 aa).

A Zn(2+)-binding site is contributed by Cys-28. A 'HIGH' region motif is present at residues 30–40 (PTVYDYPHLGH). The Zn(2+) site is built by Cys-208, His-233, and Glu-237. The 'KMSKS' region signature appears at 265 to 269 (KMSKS). Residue Lys-268 coordinates ATP.

It belongs to the class-I aminoacyl-tRNA synthetase family. Requires Zn(2+) as cofactor.

It localises to the cytoplasm. It catalyses the reaction tRNA(Cys) + L-cysteine + ATP = L-cysteinyl-tRNA(Cys) + AMP + diphosphate. The chain is Cysteine--tRNA ligase from Pyrococcus furiosus (strain ATCC 43587 / DSM 3638 / JCM 8422 / Vc1).